The following is an 834-amino-acid chain: WPP domain-associated protein (834 aa).

Coiled coils occupy residues serine 410–histidine 456, serine 574–isoleucine 700, and alanine 792–lysine 812.

Interacts with MAF1. Expressed in seedlings, leaves and fruits.

Its subcellular location is the golgi apparatus. It is found in the cytoplasm. The polypeptide is WPP domain-associated protein (WAP) (Solanum lycopersicum (Tomato)).